The sequence spans 1023 residues: Cell division cycle-associated protein 2 (1023 aa).

Basic and acidic residues predominate over residues 1-14 (MDANSKDKPPETKE). The disordered stretch occupies residues 1 to 21 (MDANSKDKPPETKESAMNNAG). 7 positions are modified to phosphoserine: S98, S120, S126, S131, S210, S291, and S309. T312 is subject to Phosphothreonine. Residues 389 to 449 (KRKRVTFGED…PEPLPQPDFD (61 aa)) form the PP1-binding domain. S400 and S407 each carry phosphoserine. The residue at position 412 (T412) is a Phosphothreonine. Phosphoserine is present on S437. The disordered stretch occupies residues 542-580 (SQETKCTKRALPKKSQVLKSCRKKKGKGKKSVQKSLYGE). Over residues 561 to 573 (SCRKKKGKGKKSV) the composition is skewed to basic residues. 2 positions are modified to phosphoserine: S591 and S614. Residues 667 to 729 (SSLGNATSDE…ERVASDSPKP (63 aa)) are disordered. The span at 679–691 (NTNIMNINENKNI) shows a compositional bias: low complexity. Over residues 696 to 706 (NKSESENEPKA) the composition is skewed to basic and acidic residues. A phosphoserine mark is found at S710 and S756. Residue K762 forms a Glycyl lysine isopeptide (Lys-Gly) (interchain with G-Cter in SUMO2) linkage. Basic and acidic residues predominate over residues 803-816 (ESKSQSEDLGRKPM). 2 disordered regions span residues 803-860 (ESKS…GSSV) and 936-1023 (SPIK…ERKQ). 2 positions are modified to phosphoserine: S936 and S977. 2 stretches are compositionally biased toward polar residues: residues 979–992 (CIST…TSQF) and 1000–1010 (SLNGKGESSLT). Residue S1000 is modified to Phosphoserine. Residues 1013–1023 (ERIEHNGERKQ) are compositionally biased toward basic and acidic residues.

In terms of assembly, interacts with PPP1CC. Phosphorylated by CDK1. May regulate its subcellular location. Ubiquitously expressed.

Its subcellular location is the nucleus. Its function is as follows. Regulator of chromosome structure during mitosis required for condensin-depleted chromosomes to retain their compact architecture through anaphase. Acts by mediating the recruitment of phopsphatase PP1-gamma subunit (PPP1CC) to chromatin at anaphase and into the following interphase. At anaphase onset, its association with chromatin targets a pool of PPP1CC to dephosphorylate substrates. This chain is Cell division cycle-associated protein 2 (CDCA2), found in Homo sapiens (Human).